The primary structure comprises 56 residues: Ovomucoid (56 aa).

One can recognise a Kazal-like domain in the interval Val-6 to Cys-56. 3 disulfides stabilise this stretch: Cys-8-Cys-38, Cys-16-Cys-35, and Cys-24-Cys-56. A glycan (N-linked (GlcNAc...) asparagine) is linked at Asn-45.

It is found in the secreted. In Callipepla squamata castanogastris (Chestnut bellied scaled quail), this protein is Ovomucoid.